Consider the following 316-residue polypeptide: Adenine deaminase (316 aa).

Residues H14, H16, and H194 each contribute to the Zn(2+) site. The active-site Proton donor is E197. A Zn(2+)-binding site is contributed by D275. Position 276 (D276) interacts with substrate.

It belongs to the metallo-dependent hydrolases superfamily. Adenosine and AMP deaminases family. Adenine deaminase type 2 subfamily. It depends on Zn(2+) as a cofactor.

The catalysed reaction is adenine + H2O + H(+) = hypoxanthine + NH4(+). Functionally, catalyzes the hydrolytic deamination of adenine to hypoxanthine. Plays an important role in the purine salvage pathway and in nitrogen catabolism. This is Adenine deaminase from Stutzerimonas stutzeri (strain A1501) (Pseudomonas stutzeri).